A 225-amino-acid chain; its full sequence is RNA chaperone ProQ (225 aa).

A disordered region spans residues Leu103–Val173. Residues Arg109–Gln118 are compositionally biased toward low complexity. Residues Arg137–Pro146 are compositionally biased toward basic residues. The segment covering Arg147 to Lys156 has biased composition (basic and acidic residues).

This sequence belongs to the ProQ family.

It localises to the cytoplasm. Functionally, RNA chaperone with significant RNA binding, RNA strand exchange and RNA duplexing activities. May regulate ProP activity through an RNA-based, post-transcriptional mechanism. This Klebsiella pneumoniae (strain 342) protein is RNA chaperone ProQ.